The sequence spans 221 residues: Pleckstrin homology domain-containing family B member 2 (221 aa).

The region spanning 2 to 109 (AFVKSGWLLR…WKFTLQDSRT (108 aa)) is the PH domain. Position 20 (Lys20) interacts with a 1,2-diacyl-sn-glycero-3-phospho-L-serine.

In terms of tissue distribution, highly expressed in brain, retina, heart and kidney. Detected at lower levels in lung, muscle and nerve.

The protein localises to the recycling endosome membrane. In terms of biological role, involved in retrograde transport of recycling endosomes. The polypeptide is Pleckstrin homology domain-containing family B member 2 (Plekhb2) (Mus musculus (Mouse)).